Consider the following 572-residue polypeptide: Urease subunit alpha (572 aa).

The region spanning G136–F572 is the Urease domain. Positions 141, 143, and 224 each coordinate Ni(2+). N6-carboxylysine is present on K224. H226 contacts substrate. 2 residues coordinate Ni(2+): H253 and H279. H327 (proton donor) is an active-site residue. A Ni(2+)-binding site is contributed by D367.

The protein belongs to the metallo-dependent hydrolases superfamily. Urease alpha subunit family. Heterotrimer of UreA (gamma), UreB (beta) and UreC (alpha) subunits. Three heterotrimers associate to form the active enzyme. The cofactor is Ni cation. Post-translationally, carboxylation allows a single lysine to coordinate two nickel ions.

Its subcellular location is the cytoplasm. It carries out the reaction urea + 2 H2O + H(+) = hydrogencarbonate + 2 NH4(+). It participates in nitrogen metabolism; urea degradation; CO(2) and NH(3) from urea (urease route): step 1/1. The sequence is that of Urease subunit alpha from Actinobacillus pleuropneumoniae serotype 5b (strain L20).